The following is a 368-amino-acid chain: p21-activated protein kinase-interacting protein 1-like (368 aa).

WD repeat units lie at residues A45 to A82, H85 to T123, A126 to I165, A207 to E245, and A248 to P289.

The protein localises to the nucleus. The protein resides in the nucleolus. Its function is as follows. Negatively regulates the PAK1 kinase. PAK1 is a member of the PAK kinase family, which has been shown to play a positive role in the regulation of signaling pathways involving MAPK8 and RELA. PAK1 exists as an inactive homodimer, which is activated by binding of small GTPases such as CDC42 to an N-terminal regulatory domain. PAK1IP1 also binds to the N-terminus of PAK1, and inhibits the specific activation of PAK1 by CDC42. May be involved in ribosomal large subunit assembly. This Danio rerio (Zebrafish) protein is p21-activated protein kinase-interacting protein 1-like (pak1ip1).